A 2388-amino-acid chain; its full sequence is Hybrid signal transduction histidine kinase M (2388 aa).

8 disordered regions span residues 1 to 32, 42 to 61, 69 to 111, 123 to 209, 237 to 337, 361 to 421, 430 to 449, and 486 to 542; these read MSNY…NNFN, FNTP…NSIS, NECN…STPI, NRSN…NAYP, TLLN…SPKL, SPHG…YNDN, TRNT…SSSF, and IYTP…NNNE. Polar residues predominate over residues 69–82; that stretch reads NECNSGGEQSPKIK. Composition is skewed to low complexity over residues 83 to 110, 125 to 206, and 242 to 288; these read TNNN…KSTP, SNLN…SNSN, and SSNN…NNGG. Residues 293–306 are compositionally biased toward polar residues; sequence QFISSDNKYNTVGN. A compositionally biased stretch (basic residues) spans 309–322; it reads HHHHHHQLHNHRHS. 4 stretches are compositionally biased toward low complexity: residues 325–337, 361–399, 410–419, and 432–449; these read QGSS…SPKL, SPHG…NQNN, NNSNDSFDYN, and NTGY…SSSF. Over residues 489-505 the composition is skewed to pro residues; that stretch reads PPYPQPYPQPPQLPPPS. The span at 506 to 541 shows a compositional bias: low complexity; that stretch reads SSSSLSKENDNVDNNNTNNNNNNNNNNNNNNNNNNN. 4 helical membrane passes run 550–570, 589–609, 645–665, and 679–699; these read TMNL…FLMV, FILI…LLVV, YIFL…NLFF, and NIST…SHIP. The segment at 732 to 888 is disordered; the sequence is NNDNKNKIND…NNNEEDDEEE (157 aa). Residues 735–744 are compositionally biased toward basic and acidic residues; that stretch reads NKNKINDKSD. Positions 745–880 are enriched in low complexity; the sequence is NSNSITNNNN…NNNNNNNNNN (136 aa). A run of 3 helical transmembrane segments spans residues 896–916, 953–973, and 1025–1045; these read FQIF…LIVL, VQFQ…LLLV, and CSVG…WMSI. The 407-residue stretch at 1093 to 1499 folds into the Histidine kinase domain; it reads RLVQNTGSII…VFELQVPMKC (407 aa). A compositionally biased stretch (basic residues) spans 1236–1257; the sequence is PIHHHRHHHRHHHHHHHHHHHH. The tract at residues 1236 to 1410 is disordered; sequence PIHHHRHHHR…INNNINNNNN (175 aa). Acidic residues predominate over residues 1260-1274; it reads DDDDYDDDNDDDNNT. Over residues 1286-1315 the composition is skewed to basic and acidic residues; sequence LSDKIKDNQDENLELKKSNNDKIIENKENQ. The segment covering 1316 to 1410 has biased composition (low complexity); sequence ENNNNNNNNN…INNNINNNNN (95 aa). The region spanning 1541 to 1656 is the Response regulatory 1 domain; that stretch reads KILVIDDNPN…QLTVLSQLLP (116 aa). D1592 is modified (4-aspartylphosphate). Disordered stretches follow at residues 1666–1702, 1960–2022, 2036–2121, 2133–2183, and 2218–2256; these read SNQN…NIDF, GNNS…NSSN, CKGD…DIIN, QQQL…VKSS, and NQLN…NNND. Positions 1676-1696 are enriched in gly residues; sequence SNGGGGGGGGGGGGGGGGGSG. Over residues 1974-1985 the composition is skewed to low complexity; the sequence is TNNNTTTTTTTT. Polar residues predominate over residues 1986–2010; it reads QPKKSPILTSSNGSDKSEGSTGSNR. A compositionally biased stretch (low complexity) spans 2054 to 2064; that stretch reads DSSSSSSSSDS. The segment covering 2065 to 2076 has biased composition (basic and acidic residues); that stretch reads HGQDDHSYRLED. Low complexity-rich tracts occupy residues 2078–2109 and 2133–2165; these read SISS…SGIN and QQQL…LPIP. Residues 2169-2183 are compositionally biased toward polar residues; that stretch reads INSSGASSGIKVKSS. The Response regulatory 2 domain occupies 2262-2383; the sequence is NILLVEDNLV…LLISLLKKLV (122 aa). At D2313 the chain carries 4-aspartylphosphate.

In terms of processing, activation probably requires transfer of a phosphate group between a histidine in the kinase core (transmitter) domain and an aspartate of the receiver domain.

It localises to the membrane. It carries out the reaction ATP + protein L-histidine = ADP + protein N-phospho-L-histidine.. In terms of biological role, acts as a receptor histidine kinase for a signal transduction pathway. This protein undergoes an ATP-dependent autophosphorylation at a conserved histidine residue in the kinase core, and a phosphoryl group is then transferred to a conserved aspartate residue in the receiver domain. The chain is Hybrid signal transduction histidine kinase M (dhkM) from Dictyostelium discoideum (Social amoeba).